A 391-amino-acid polypeptide reads, in one-letter code: Mannose-6-phosphate isomerase (391 aa).

Zn(2+) is bound by residues Gln97, His99, Glu134, and His255. The active site involves Arg274. At Lys280 the chain carries N6-acetyllysine.

The protein belongs to the mannose-6-phosphate isomerase type 1 family. Zn(2+) serves as cofactor.

It localises to the cytoplasm. It carries out the reaction D-mannose 6-phosphate = D-fructose 6-phosphate. In terms of biological role, involved in the conversion of glucose to GDP-L-fucose, which can be converted to L-fucose, a capsular polysaccharide. The protein is Mannose-6-phosphate isomerase (manA) of Escherichia coli (strain K12).